The sequence spans 424 residues: Serine hydroxymethyltransferase (424 aa).

Residues leucine 113 and 117–119 (GHL) each bind (6S)-5,6,7,8-tetrahydrofolate. An N6-(pyridoxal phosphate)lysine modification is found at lysine 222. 361–363 (SPF) contacts (6S)-5,6,7,8-tetrahydrofolate.

It belongs to the SHMT family. In terms of assembly, homodimer. The cofactor is pyridoxal 5'-phosphate.

The protein resides in the cytoplasm. It catalyses the reaction (6R)-5,10-methylene-5,6,7,8-tetrahydrofolate + glycine + H2O = (6S)-5,6,7,8-tetrahydrofolate + L-serine. The protein operates within one-carbon metabolism; tetrahydrofolate interconversion. It participates in amino-acid biosynthesis; glycine biosynthesis; glycine from L-serine: step 1/1. Catalyzes the reversible interconversion of serine and glycine with tetrahydrofolate (THF) serving as the one-carbon carrier. This reaction serves as the major source of one-carbon groups required for the biosynthesis of purines, thymidylate, methionine, and other important biomolecules. Also exhibits THF-independent aldolase activity toward beta-hydroxyamino acids, producing glycine and aldehydes, via a retro-aldol mechanism. This Flavobacterium psychrophilum (strain ATCC 49511 / DSM 21280 / CIP 103535 / JIP02/86) protein is Serine hydroxymethyltransferase.